The sequence spans 164 residues: Crossover junction endodeoxyribonuclease RuvC (164 aa).

Catalysis depends on residues Asp-7, Glu-67, and Asp-140. The Mg(2+) site is built by Asp-7, Glu-67, and Asp-140.

Belongs to the RuvC family. As to quaternary structure, homodimer which binds Holliday junction (HJ) DNA. The HJ becomes 2-fold symmetrical on binding to RuvC with unstacked arms; it has a different conformation from HJ DNA in complex with RuvA. In the full resolvosome a probable DNA-RuvA(4)-RuvB(12)-RuvC(2) complex forms which resolves the HJ. It depends on Mg(2+) as a cofactor.

The protein localises to the cytoplasm. The catalysed reaction is Endonucleolytic cleavage at a junction such as a reciprocal single-stranded crossover between two homologous DNA duplexes (Holliday junction).. Functionally, the RuvA-RuvB-RuvC complex processes Holliday junction (HJ) DNA during genetic recombination and DNA repair. Endonuclease that resolves HJ intermediates. Cleaves cruciform DNA by making single-stranded nicks across the HJ at symmetrical positions within the homologous arms, yielding a 5'-phosphate and a 3'-hydroxyl group; requires a central core of homology in the junction. The consensus cleavage sequence is 5'-(A/T)TT(C/G)-3'. Cleavage occurs on the 3'-side of the TT dinucleotide at the point of strand exchange. HJ branch migration catalyzed by RuvA-RuvB allows RuvC to scan DNA until it finds its consensus sequence, where it cleaves and resolves the cruciform DNA. In Chloroflexus aurantiacus (strain ATCC 29364 / DSM 637 / Y-400-fl), this protein is Crossover junction endodeoxyribonuclease RuvC.